The primary structure comprises 494 residues: Ketol-acid reductoisomerase (NADP(+)) (494 aa).

The 195-residue stretch at 14 to 208 (LDQLGRCRFM…GGHRAGCLES (195 aa)) folds into the KARI N-terminal Rossmann domain. NADP(+) is bound by residues 45-48 (CGAQ), Arg-68, Arg-76, Ser-78, and 108-110 (DKQ). His-132 is an active-site residue. Gly-158 is a binding site for NADP(+). 2 consecutive KARI C-terminal knotted domains span residues 209 to 344 (SFVA…NYPE) and 345 to 487 (SDVE…MSDM). Mg(2+) contacts are provided by Asp-217, Glu-221, Glu-389, and Glu-393. Position 414 (Ser-414) interacts with substrate.

Belongs to the ketol-acid reductoisomerase family. The cofactor is Mg(2+).

The enzyme catalyses (2R)-2,3-dihydroxy-3-methylbutanoate + NADP(+) = (2S)-2-acetolactate + NADPH + H(+). It catalyses the reaction (2R,3R)-2,3-dihydroxy-3-methylpentanoate + NADP(+) = (S)-2-ethyl-2-hydroxy-3-oxobutanoate + NADPH + H(+). Its pathway is amino-acid biosynthesis; L-isoleucine biosynthesis; L-isoleucine from 2-oxobutanoate: step 2/4. It participates in amino-acid biosynthesis; L-valine biosynthesis; L-valine from pyruvate: step 2/4. In terms of biological role, involved in the biosynthesis of branched-chain amino acids (BCAA). Catalyzes an alkyl-migration followed by a ketol-acid reduction of (S)-2-acetolactate (S2AL) to yield (R)-2,3-dihydroxy-isovalerate. In the isomerase reaction, S2AL is rearranged via a Mg-dependent methyl migration to produce 3-hydroxy-3-methyl-2-ketobutyrate (HMKB). In the reductase reaction, this 2-ketoacid undergoes a metal-dependent reduction by NADPH to yield (R)-2,3-dihydroxy-isovalerate. This is Ketol-acid reductoisomerase (NADP(+)) from Aliivibrio fischeri (strain ATCC 700601 / ES114) (Vibrio fischeri).